The following is a 1704-amino-acid chain: Phospholipid-transporting ATPase ABCA3 (1704 aa).

Asn14 carries an N-linked (GlcNAc...) asparagine glycan. Residues 22–42 traverse the membrane as a helical segment; sequence VLVTVLELFLPLLFSGILIWL. N-linked (GlcNAc...) asparagine glycosylation is found at Asn53, Asn124, Asn140, and Asn228. A run of 5 helical transmembrane segments spans residues 251–271, 307–327, 344–364, 373–393, and 405–425; these read ISDPFLIAIQYQLPLLLMLSF, AWFLMFLLFSLIVVSFMTLLF, SLVLAFLLCFAISSISFSFMV, MAATVGGFLYFFTYTPYFFVA, and LLSCLLSNVAMAMGAQLIGKF. The ABC transporter 1 domain maps to 530–763; sequence IKIKHLSKVF…YGAGYHMTLV (234 aa). Residue 566–573 coordinates ATP; the sequence is GHNGAGKT. Residues Asn620 and Asn945 are each glycosylated (N-linked (GlcNAc...) asparagine). Transmembrane regions (helical) follow at residues 1100–1120, 1144–1164, 1183–1203, 1213–1233, 1245–1265, and 1310–1330; these read IALNLLIAMAFLASTFSILAV, SALLWDLISFLVPSLLLLVVF, LLLMLYGWAIIPLMYLLSFFF, LTIFNILSGIATFIVVTIMRI, LDHVFLVLPNHCLGMAVSNFY, and MAASGGIYLTLLFLIETNLLW. N-linked (GlcNAc...) asparagine glycosylation occurs at Asn1350. The ABC transporter 2 domain occupies 1381–1614; the sequence is LIINELSKVY…FGSGYSLQAK (234 aa). 1416–1423 lines the ATP pocket; sequence GFNGAGKT.

Homooligomer; disulfide-linked. N-glycosylated. Localization at intracellular vesicles is accompanied by processing of oligosaccharide from high mannose type to complex type. N-linked glycosylation at Asn-124 and Asn-140 is required for stability and efficient anterograde trafficking and prevents from proteasomal degradation. Post-translationally, proteolytically cleaved by CTSL and to a lower extent by CTSB within multivesicular bodies (MVB) and lamellar bodies (LB) leading to a mature form of 150 kDa. Highly expressed in lung, moderately expressed in stomach, intestine, and kidney and weakly expressed in thyroid, brain, liver, spleen, heart, testis, and thymus.

It is found in the endosome. The protein localises to the multivesicular body membrane. Its subcellular location is the cytoplasmic vesicle membrane. The protein resides in the late endosome membrane. It localises to the lysosome membrane. The catalysed reaction is ATP + H2O + xenobioticSide 1 = ADP + phosphate + xenobioticSide 2.. It catalyses the reaction a 1,2-diacyl-sn-glycero-3-phosphocholine(in) + ATP + H2O = a 1,2-diacyl-sn-glycero-3-phosphocholine(out) + ADP + phosphate + H(+). It carries out the reaction ATP + H2O + phospholipidSide 1 = ADP + phosphate + phospholipidSide 2.. The enzyme catalyses 1,2-dihexadecanoyl-sn-glycero-3-phosphocholine(in) + ATP + H2O = 1,2-dihexadecanoyl-sn-glycero-3-phosphocholine(out) + ADP + phosphate + H(+). The catalysed reaction is cholesterol(in) + ATP + H2O = cholesterol(out) + ADP + phosphate + H(+). It catalyses the reaction a 1,2-diacyl-sn-glycero-3-phospho-(1'-sn-glycerol)(in) + ATP + H2O = a 1,2-diacyl-sn-glycero-3-phospho-(1'-sn-glycerol)(out) + ADP + phosphate + H(+). Catalyzes the ATP-dependent transport of phospholipids such as phosphatidylcholine and phosphoglycerol from the cytoplasm into the lumen side of lamellar bodies, in turn participates in the lamellar bodies biogenesis and homeostasis of pulmonary surfactant. Transports preferentially phosphatidylcholine containing short acyl chains. In addition plays a role as an efflux transporter of miltefosine across macrophage membranes and free cholesterol (FC) through intralumenal vesicles by removing FC from the cell as a component of surfactant and protects cells from free cholesterol toxicity. The polypeptide is Phospholipid-transporting ATPase ABCA3 (Rattus norvegicus (Rat)).